Consider the following 204-residue polypeptide: Probable calcium-binding protein CML46 (204 aa).

EF-hand domains are found at residues 72–106 (LEFQTSIKHEEYRDDDDDGLCREDVGMVMKSLGLS), 132–167 (PSLEEVKQAFDVFDENRDGFIDPIDLQRVLTILGLK), and 170–204 (SNLENCRRMIRSFDGSKDGRIDFYGFVKFMENNFC). Positions 145, 147, 149, and 156 each coordinate Ca(2+).

Its function is as follows. Potential calcium sensor. The chain is Probable calcium-binding protein CML46 from Arabidopsis thaliana (Mouse-ear cress).